Reading from the N-terminus, the 273-residue chain is 4-hydroxy-tetrahydrodipicolinate reductase (273 aa).

Residues 11–16 (GATGKM) and 106–108 (GTT) each bind NAD(+). Histidine 162 (proton donor/acceptor) is an active-site residue. Position 163 (histidine 163) interacts with (S)-2,3,4,5-tetrahydrodipicolinate. The Proton donor role is filled by lysine 166. 172 to 173 (GT) contributes to the (S)-2,3,4,5-tetrahydrodipicolinate binding site.

This sequence belongs to the DapB family.

It localises to the cytoplasm. The enzyme catalyses (S)-2,3,4,5-tetrahydrodipicolinate + NAD(+) + H2O = (2S,4S)-4-hydroxy-2,3,4,5-tetrahydrodipicolinate + NADH + H(+). It catalyses the reaction (S)-2,3,4,5-tetrahydrodipicolinate + NADP(+) + H2O = (2S,4S)-4-hydroxy-2,3,4,5-tetrahydrodipicolinate + NADPH + H(+). It functions in the pathway amino-acid biosynthesis; L-lysine biosynthesis via DAP pathway; (S)-tetrahydrodipicolinate from L-aspartate: step 4/4. In terms of biological role, catalyzes the conversion of 4-hydroxy-tetrahydrodipicolinate (HTPA) to tetrahydrodipicolinate. The protein is 4-hydroxy-tetrahydrodipicolinate reductase of Synechococcus elongatus (strain ATCC 33912 / PCC 7942 / FACHB-805) (Anacystis nidulans R2).